Reading from the N-terminus, the 258-residue chain is Pimeloyl-[acyl-carrier protein] methyl ester esterase (258 aa).

An AB hydrolase-1 domain is found at Leu16–Pro242. Residues Trp22, Ser82–Leu83, and Phe143–Gln147 each bind substrate. The active-site Nucleophile is the Ser82. Residues Asp207 and His235 contribute to the active site. His235 serves as a coordination point for substrate.

The protein belongs to the AB hydrolase superfamily. Carboxylesterase BioH family. As to quaternary structure, monomer.

It is found in the cytoplasm. The catalysed reaction is 6-carboxyhexanoyl-[ACP] methyl ester + H2O = 6-carboxyhexanoyl-[ACP] + methanol + H(+). It participates in cofactor biosynthesis; biotin biosynthesis. The physiological role of BioH is to remove the methyl group introduced by BioC when the pimeloyl moiety is complete. It allows to synthesize pimeloyl-ACP via the fatty acid synthetic pathway through the hydrolysis of the ester bonds of pimeloyl-ACP esters. The protein is Pimeloyl-[acyl-carrier protein] methyl ester esterase of Edwardsiella ictaluri (strain 93-146).